Consider the following 79-residue polypeptide: D-alanyl carrier protein (79 aa).

A Carrier domain is found at 1–77; that stretch reads MDVKETILNI…KIISGVVELM (77 aa). The residue at position 35 (serine 35) is an O-(pantetheine 4'-phosphoryl)serine.

Belongs to the DltC family. In terms of processing, 4'-phosphopantetheine is transferred from CoA to a specific serine of apo-DCP.

It is found in the cytoplasm. It functions in the pathway cell wall biogenesis; lipoteichoic acid biosynthesis. Its function is as follows. Carrier protein involved in the D-alanylation of lipoteichoic acid (LTA). The loading of thioester-linked D-alanine onto DltC is catalyzed by D-alanine--D-alanyl carrier protein ligase DltA. The DltC-carried D-alanyl group is further transferred to cell membrane phosphatidylglycerol (PG) by forming an ester bond, probably catalyzed by DltD. D-alanylation of LTA plays an important role in modulating the properties of the cell wall in Gram-positive bacteria, influencing the net charge of the cell wall. The polypeptide is D-alanyl carrier protein (Streptococcus suis (strain 05ZYH33)).